A 73-amino-acid polypeptide reads, in one-letter code: Guanine nucleotide-binding protein G(I)/G(S)/G(O) subunit gamma-11 (73 aa).

The interval 51-73 is disordered; it reads DPLVKGIPEDKNPFKEKGSCVIS. At cysteine 70 the chain carries Cysteine methyl ester. Residue cysteine 70 is the site of S-farnesyl cysteine attachment. A propeptide spans 71-73 (removed in mature form); sequence VIS.

Belongs to the G protein gamma family. As to quaternary structure, g proteins are composed of 3 units, alpha, beta and gamma. Interacts with beta-1 and beta-3, but not with beta-2. Abundantly expressed in all tissues tested except for brain.

Its subcellular location is the cell membrane. In terms of biological role, guanine nucleotide-binding proteins (G proteins) are involved as a modulator or transducer in various transmembrane signaling systems. The beta and gamma chains are required for the GTPase activity, for replacement of GDP by GTP, and for G protein-effector interaction. This chain is Guanine nucleotide-binding protein G(I)/G(S)/G(O) subunit gamma-11 (GNG11), found in Homo sapiens (Human).